We begin with the raw amino-acid sequence, 1366 residues long: Agglutinin-like protein 6 (1366 aa).

The first 18 residues, 1-18 (MKTVILLHLFFYCTIAMA), serve as a signal peptide directing secretion. Cystine bridges form between Cys74–Cys151, Cys97–Cys113, Cys206–Cys301, and Cys228–Cys257. The N-linked (GlcNAc...) asparagine glycan is linked to Asn294. ALS repeat units follow at residues 368–399 (TTIT…VDVP), 404–435 (TTIT…VQVP), 441–472 (VTTT…IKEP), 477–508 (VTTT…VREP), 513–544 (VTTT…VREP), and 549–580 (VTTT…IHDP). A disordered region spans residues 449-470 (GSVPTTETVTTGPQGTDSVIIK). A compositionally biased stretch (low complexity) spans 451-464 (VPTTETVTTGPQGT). 3 disordered regions span residues 583–658 (ESSS…TSES), 758–780 (LSSD…FPHT), and 804–833 (VSLT…SDQS). Asn596 carries N-linked (GlcNAc...) asparagine glycosylation. 2 stretches are compositionally biased toward low complexity: residues 758–775 (LSSD…SPSD) and 805–833 (SLTS…SDQS). Asn866 carries N-linked (GlcNAc...) asparagine glycosylation. Disordered stretches follow at residues 874-915 (ESES…STVT), 928-976 (TGMP…TSAS), 996-1040 (SETS…KESS), 1081-1130 (EDNE…VSSV), and 1158-1218 (ETSL…STNN). 3 stretches are compositionally biased toward low complexity: residues 875–889 (SESS…ASES), 898–915 (SEST…STVT), and 940–958 (TSDV…PTSA). The span at 959 to 969 (EQSITDNPNID) shows a compositional bias: polar residues. Positions 996-1021 (SETSTLSSDDSTSSDTSISSTTNSDT) are enriched in low complexity. 2 stretches are compositionally biased toward polar residues: residues 1022–1040 (GNIN…KESS) and 1085–1107 (PNTF…SVLS). 2 stretches are compositionally biased toward low complexity: residues 1121–1130 (VTDTTTVSSV) and 1158–1177 (ETSL…SSGT). Polar residues-rich tracts occupy residues 1192-1202 (TSTDNRLSYST) and 1209-1218 (TYANSGSTNN). An N-linked (GlcNAc...) asparagine glycan is attached at Asn1273. Ser1345 carries the GPI-anchor amidated serine lipid modification. The propeptide at 1346–1366 (SATKHPSWLLKFISVALFFFL) is removed in mature form.

Belongs to the ALS family. Post-translationally, the GPI-anchor is attached to the protein in the endoplasmic reticulum and serves to target the protein to the cell surface. There, the glucosamine-inositol phospholipid moiety is cleaved off and the GPI-modified mannoprotein is covalently attached via its lipidless GPI glycan remnant to the 1,6-beta-glucan of the outer cell wall layer.

The protein resides in the cell membrane. It is found in the secreted. The protein localises to the cell wall. Its function is as follows. Cell surface adhesion protein which mediates both yeast-to-host tissue adherence and yeast aggregation. Plays an important role in the pathogenesis of C.albicans infections. This Candida albicans (strain SC5314 / ATCC MYA-2876) (Yeast) protein is Agglutinin-like protein 6 (ALS6).